The primary structure comprises 229 residues: Large ribosomal subunit protein uL1 (229 aa).

Belongs to the universal ribosomal protein uL1 family. Part of the 50S ribosomal subunit.

Binds directly to 23S rRNA. The L1 stalk is quite mobile in the ribosome, and is involved in E site tRNA release. Its function is as follows. Protein L1 is also a translational repressor protein, it controls the translation of the L11 operon by binding to its mRNA. The chain is Large ribosomal subunit protein uL1 from Ureaplasma parvum serovar 3 (strain ATCC 27815 / 27 / NCTC 11736).